The following is a 421-amino-acid chain: Probable indole-3-pyruvate monooxygenase YUCCA9 (421 aa).

29 to 34 (GAGPSG) lines the FAD pocket. 196 to 201 (GCGNSG) is an NADP(+) binding site.

Belongs to the FMO family. Requires FAD as cofactor.

The enzyme catalyses indole-3-pyruvate + NADPH + O2 + H(+) = (indol-3-yl)acetate + CO2 + NADP(+) + H2O. Its pathway is plant hormone metabolism; auxin biosynthesis. Functionally, involved in auxin biosynthesis. Belongs to the set of redundant YUCCA genes probably responsible for auxin biosynthesis in roots. The chain is Probable indole-3-pyruvate monooxygenase YUCCA9 (YUC9) from Arabidopsis thaliana (Mouse-ear cress).